A 301-amino-acid polypeptide reads, in one-letter code: UstYa family oxidase phomYd (301 aa).

A disordered region spans residues 1 to 26 (MEKFFSPSRHNYADLSPTDVPASEES). Residues 47-69 (VLVNRLLAASTVALVMVSLWLGW) traverse the membrane as a helical segment. Short sequence motifs (HXXHC) lie at residues 189–194 (THSVHC) and 218–222 (HTDHC). N-linked (GlcNAc...) asparagine glycosylation occurs at Asn-275.

Belongs to the ustYa family.

The protein resides in the membrane. It functions in the pathway mycotoxin biosynthesis. In terms of biological role, ustYa family oxidase; part of the gene cluster that mediates the biosynthesis of the phomopsins, a group of hexapeptide mycotoxins which infects lupins and causes lupinosis disease in livestock. Within the pathway, phomYd catalyzes the desaturation of the Asp moiety into 2,3-dehydroaspartic acid (dAsp). The pathway starts with the processing of the precursor phomA by several endopeptidases including kexin proteases as well as the cluster-specific S41 family peptidase phomP1 and the oligopeptidase phomG to produce 10 identical copies of the hexapeptide Tyr-Val-Ile-Pro-Ile-Asp. After being excised from the precursor peptide, the core peptides are cyclized and modified post-translationally by enzymes encoded within the gene cluster. The timing and order of proteolysis of the phomA precursor and PTMs are still unknown. Two tyrosinase-like enzymes, phomQ1 and phomQ2, catalyze the chlorination and hydroxylation of Tyr, respectively. PhomYb, is proposed to be involved in the construction of the macrocyclic structure. The other 4 ustYa family proteins may be involved in PTMs that generate the unique structure of phomopsin A. PhomYa is required for the hydroxylation of C-beta of Tyr. PhomYc, phomYd, and phomYe are responsible for the biosynthesis of 2,3-dehydroisoleucine (dIle), 2,3-dehydroaspartic acid (dAsp), and 3,4-dehydroproline (dPro), respectively. While dIle formation by phomYc is indispensable for the installation of dAsp by phomYd, the order of the other PTMs have not been elucidated yet. Most of the biosynthetic enzymes likely have broad substrate specificity, and thus, there might be a metabolic grid from a precursor to phomopsin A. The enzyme(s) responsible for the biosynthesis of 3,4-dehydrovaline (dVal) have also not been identified yet. Finally, phomM acts as an S-adenosylmethionine-dependent alpha-N-methyltransferase that catalyzes two successive N-methylation reactions, converting N-desmethyl-phomopsin A to phomopsin A and phomopsin A further to an N,N-dimethylated congener called phomopsin E. This Diaporthe leptostromiformis (Lupinosis disease fungus) protein is UstYa family oxidase phomYd.